We begin with the raw amino-acid sequence, 838 residues long: Protein translocase subunit SecA (838 aa).

ATP is bound by residues Gln85, 103-107 (GEGKT), and Asp493. Zn(2+) is bound by residues Cys823, Cys825, Cys834, and His835.

This sequence belongs to the SecA family. As to quaternary structure, monomer and homodimer. Part of the essential Sec protein translocation apparatus which comprises SecA, SecYEG and auxiliary proteins SecDF. Other proteins may also be involved. It depends on Zn(2+) as a cofactor.

It is found in the cell membrane. Its subcellular location is the cytoplasm. It carries out the reaction ATP + H2O + cellular proteinSide 1 = ADP + phosphate + cellular proteinSide 2.. Part of the Sec protein translocase complex. Interacts with the SecYEG preprotein conducting channel. Has a central role in coupling the hydrolysis of ATP to the transfer of proteins into and across the cell membrane, serving as an ATP-driven molecular motor driving the stepwise translocation of polypeptide chains across the membrane. This chain is Protein translocase subunit SecA, found in Streptococcus gordonii (strain Challis / ATCC 35105 / BCRC 15272 / CH1 / DL1 / V288).